The chain runs to 152 residues: Transcriptional regulator MraZ (152 aa).

SpoVT-AbrB domains are found at residues 5–52 (ASSL…PLAQ) and 81–124 (ATEY…DEAR).

This sequence belongs to the MraZ family. Forms oligomers.

The protein resides in the cytoplasm. It is found in the nucleoid. The protein is Transcriptional regulator MraZ of Pseudoalteromonas translucida (strain TAC 125).